The sequence spans 213 residues: Ras-related protein Rab-4A (213 aa).

GTP is bound by residues glycine 18, threonine 19, glycine 20, lysine 21, serine 22, cysteine 23, serine 37, histidine 39, and threonine 40. Position 22 (serine 22) interacts with Mg(2+). Residues 39–44 (HTIGVE) carry the Switch 1 motif. 2 residues coordinate Mg(2+): threonine 40 and aspartate 63. Residues 65–74 (AGQERFRSVT) carry the Switch 2 motif. Positions 66, 121, 122, 124, 152, and 153 each coordinate GTP. Residues cysteine 211 and cysteine 213 are each lipidated (S-geranylgeranyl cysteine). A Cysteine methyl ester modification is found at cysteine 213.

The protein belongs to the small GTPase superfamily. Rab family. Mg(2+) serves as cofactor.

Its subcellular location is the membrane. It localises to the cytoplasm. It is found in the early endosome membrane. The protein resides in the recycling endosome membrane. The catalysed reaction is GTP + H2O = GDP + phosphate + H(+). With respect to regulation, regulated by guanine nucleotide exchange factors (GEFs) which promote the exchange of bound GDP for free GTP. Regulated by GTPase activating proteins (GAPs) which increase the GTP hydrolysis activity. Inhibited by GDP dissociation inhibitors (GDIs). In terms of biological role, the small GTPases Rab are key regulators of intracellular membrane trafficking, from the formation of transport vesicles to their fusion with membranes. Rabs cycle between an inactive GDP-bound form and an active GTP-bound form that is able to recruit to membranes different sets of downstream effectors directly responsible for vesicle formation, movement, tethering and fusion. RAB4A is involved in protein transport. Also plays a role in vesicular traffic. Mediates VEGFR2 endosomal trafficking to enhance VEGFR2 signaling. Acts as a regulator of platelet alpha-granule release during activation and aggregation of platelets. The polypeptide is Ras-related protein Rab-4A (rab4a) (Danio rerio (Zebrafish)).